The following is a 331-amino-acid chain: Protein C10 (331 aa).

Belongs to the poxviridae C4/C10 protein family.

The protein is Protein C10 of Vaccinia virus (strain Western Reserve) (VACV).